The chain runs to 163 residues: Single-stranded DNA-binding protein 1 (163 aa).

The SSB domain occupies Met1–Glu104. Positions Arg106–Phe163 are disordered. Residues Gly111 to Ser135 show a composition bias toward low complexity. The Important for interaction with partner proteins signature appears at Asp158–Phe163.

Homotetramer.

Functionally, plays an important role in DNA replication, recombination and repair. Binds to ssDNA and to an array of partner proteins to recruit them to their sites of action during DNA metabolism. The polypeptide is Single-stranded DNA-binding protein 1 (ssb1) (Streptococcus agalactiae serotype III (strain NEM316)).